A 347-amino-acid polypeptide reads, in one-letter code: Microneme protein 21 (347 aa).

Its subcellular location is the cytoplasmic vesicle. The protein localises to the secretory vesicle. It is found in the microneme. The protein resides in the secreted. The protein is Microneme protein 21 of Toxoplasma gondii.